The primary structure comprises 77 residues: U8-lycotoxin-Ls1t (77 aa).

Residues 1-20 (MKLIIFTGLVPFAIVSLIEA) form the signal peptide. Positions 21–26 (QAENEK) are excised as a propeptide.

This sequence belongs to the neurotoxin 19 (CSTX) family. 08 (U8-Lctx) subfamily. In terms of processing, contains 4 disulfide bonds. As to expression, expressed by the venom gland.

It localises to the secreted. This chain is U8-lycotoxin-Ls1t, found in Lycosa singoriensis (Wolf spider).